A 488-amino-acid chain; its full sequence is GTPase Der (488 aa).

2 consecutive EngA-type G domains span residues 3-166 (PVIA…PRDP) and 193-366 (IKIA…MSAV). GTP contacts are provided by residues 9 to 16 (GRPNVGKS), 56 to 60 (DTGGI), 118 to 121 (NKID), 199 to 206 (GRPNVGKS), 246 to 250 (DTAGV), and 311 to 314 (NKWD). Positions 367-451 (TRWPTSRLTQ…PIRIEYKGGD (85 aa)) constitute a KH-like domain. Basic and acidic residues predominate over residues 449–461 (GGDNPFEGKKNTL). The tract at residues 449–488 (GGDNPFEGKKNTLTDRQVNKKRRLMSHHKKAEKKRRDKRK) is disordered. The segment covering 467-488 (NKKRRLMSHHKKAEKKRRDKRK) has biased composition (basic residues).

Belongs to the TRAFAC class TrmE-Era-EngA-EngB-Septin-like GTPase superfamily. EngA (Der) GTPase family. Associates with the 50S ribosomal subunit.

Its function is as follows. GTPase that plays an essential role in the late steps of ribosome biogenesis. This is GTPase Der from Pseudomonas entomophila (strain L48).